We begin with the raw amino-acid sequence, 193 residues long: Crossover junction endodeoxyribonuclease RuvC (193 aa).

Catalysis depends on residues Asp7, Glu68, and Asp141. Residues Asp7, Glu68, and Asp141 each contribute to the Mg(2+) site.

This sequence belongs to the RuvC family. As to quaternary structure, homodimer which binds Holliday junction (HJ) DNA. The HJ becomes 2-fold symmetrical on binding to RuvC with unstacked arms; it has a different conformation from HJ DNA in complex with RuvA. In the full resolvosome a probable DNA-RuvA(4)-RuvB(12)-RuvC(2) complex forms which resolves the HJ. The cofactor is Mg(2+).

Its subcellular location is the cytoplasm. It carries out the reaction Endonucleolytic cleavage at a junction such as a reciprocal single-stranded crossover between two homologous DNA duplexes (Holliday junction).. In terms of biological role, the RuvA-RuvB-RuvC complex processes Holliday junction (HJ) DNA during genetic recombination and DNA repair. Endonuclease that resolves HJ intermediates. Cleaves cruciform DNA by making single-stranded nicks across the HJ at symmetrical positions within the homologous arms, yielding a 5'-phosphate and a 3'-hydroxyl group; requires a central core of homology in the junction. The consensus cleavage sequence is 5'-(A/T)TT(C/G)-3'. Cleavage occurs on the 3'-side of the TT dinucleotide at the point of strand exchange. HJ branch migration catalyzed by RuvA-RuvB allows RuvC to scan DNA until it finds its consensus sequence, where it cleaves and resolves the cruciform DNA. The sequence is that of Crossover junction endodeoxyribonuclease RuvC from Bifidobacterium adolescentis (strain ATCC 15703 / DSM 20083 / NCTC 11814 / E194a).